The following is a 2515-amino-acid chain: Polyprotein P1234 (2515 aa).

Positions 30–260 (VAQQATPNDH…EHRASLQSWH (231 aa)) constitute an Alphavirus-like MT domain. Positions 245–264 (GSTLYPEHRASLQSWHLPSV) are nsP1 membrane-binding. Cys420 is lipidated: S-palmitoyl cysteine; by host. The 156-residue stretch at 695–850 (ELTNPPYHEL…RDICTKTFYK (156 aa)) folds into the (+)RNA virus helicase ATP-binding domain. 726–733 (GTPGSGKS) contributes to the a ribonucleoside 5'-triphosphate binding site. The (+)RNA virus helicase C-terminal domain occupies 851–999 (FISRRCTQPV…IEDWEAEHKG (149 aa)). One can recognise a Peptidase C9 domain in the interval 1012 to 1341 (NPFSCKTNVC…CVISSVYEGT (330 aa)). Positions 1013–1032 (PFSCKTNVCWAKALEPILAT) are nucleolus localization signal. The For cysteine protease nsP2 activity role is filled by Cys1021. Positions 1066–1075 (IKFFGMDLTS) match the Nuclear export signal motif. The For cysteine protease nsP2 activity role is filled by His1098. Residues 1196–1200 (PHKRI) carry the Nuclear localization signal motif. The Macro domain occupies 1348–1507 (APSYRTKREN…RIDAVLQLKE (160 aa)). Residues Asn1371, Gly1379, Gly1459, Ile1460, and Tyr1461 each coordinate ADP-D-ribose. 4 residues coordinate Zn(2+): Cys1610, Cys1612, Cys1635, and Cys1653. Disordered regions lie at residues 1678 to 1705 (QPAAPPAQDEEAPEAVATPAPPAADNTS) and 1777 to 1797 (LAAASKTQEEPIPPASTSSAD). 2 consecutive short sequence motifs (FGDF; binding to host G3BP1) follow at residues 1839-1842 (FGSF) and 1862-1865 (FGSF). The RdRp catalytic domain maps to 2269-2384 (DPVLETDIAS…HGVVSDKEMA (116 aa)).

As to quaternary structure, interacts with non-structural protein 3. Interacts with RNA-directed RNA polymerase nsP4. Interacts with protease nsP2. interacts with itself. Interacts with mRNA-capping enzyme nsP1. Interacts with host DDX1. Interacts with host DDX3. Interacts (via C-terminus) with host G3BP1; this interaction inhibits the formation of host stress granules on viral mRNAs and the nsp3-G3BP1 complexes bind viral RNAs and probably orchestrate the assembly of viral replication complexes. Interacts (via C-terminus) with host G3BP2; this interaction inhibits the formation of host stress granules on viral mRNAs and the nsp3-G3BP2 complexes bind viral RNAs and probably orchestrate the assembly of viral replication complexes. In terms of assembly, interacts with mRNA-capping enzyme nsP1. Interacts with protease nsP2. interacts with itself. As to quaternary structure, interacts with RNA-directed RNA polymerase nsP4. Interacts with mRNA-capping enzyme nsP1. Interacts with KPNA1/karyopherin-alpha1; this interaction probably allows the active transport of protease nsP2 into the host nucleus. Mg(2+) serves as cofactor. It depends on Mn(2+) as a cofactor. In terms of processing, specific enzymatic cleavages in vivo yield mature proteins. The processing of the polyprotein is temporally regulated. In early stages (1.7 hpi), P1234 is first cleaved in trans through its nsP2 protease activity, releasing P123' and nsP4, which associate to form the early replication complex. At the same time, P1234 is also cut at the nsP1/nsP2 site early in infection but with lower efficiency. After replication of the viral minus-strand RNAs (4 hpi), the polyproteins are cut at the nsP1/nsP2 and nsP2/nsP3 sites very efficiently, preventing accumulation of P123' and P1234 and allowing the formation of the late replication complex. NsP3'/nsP4 site is not cleaved anymore and P34 is produced rather than nsP4. Specific enzymatic cleavages in vivo yield mature proteins. The processing of the polyprotein is temporally regulated. In early stages (1.7 hpi), P123 is cleaved at the nsP1/nsP2 site with low efficiency. After replication of the viral minus-strand RNAs (4 hpi), the polyproteins are cut at the nsP1/nsP2 and nsP2/nsP3 sites very efficiently, preventing accumulation of P123 and allowing the formation of the late replication complex. Post-translationally, specific enzymatic cleavages in vivo yield mature proteins. The processing of the polyprotein is temporally regulated. In early stages (1.7 hpi), P123' is cleaved at the nsP1/nsP2 site with low efficiency. After replication of the viral minus-strand RNAs (4 hpi), the polyproteins are cut at the nsP1/nsP2 and nsP2/nsP3 sites very efficiently, preventing accumulation of P123' and allowing the formation of the late replication complex. In terms of processing, palmitoylated by host palmitoyltransferases ZDHHC2 and ZDHHC19. Phosphorylated by host on serines and threonines. Post-translationally, ubiquitinated; targets the protein for rapid degradation via the ubiquitin system. Nsp4 is present in extremely low quantities due to low frequency of translation through the amber stop-codon and the degradation by the ubiquitin pathway.

It is found in the host cytoplasmic vesicle membrane. It localises to the host cell membrane. Its subcellular location is the host cell projection. The protein resides in the host filopodium. The protein localises to the host nucleus. It is found in the host cytoplasm. The catalysed reaction is GTP + S-adenosyl-L-methionine = N(7)-methyl-GTP + S-adenosyl-L-homocysteine. It carries out the reaction N(7)-methyl-GTP + L-histidyl-[protein] = N(tele)-(N(7)-methylguanosine 5'-phospho)-L-histidyl-[protein] + diphosphate. It catalyses the reaction N(tele)-(N(7)-methylguanosine 5'-phospho)-L-histidyl-[protein] + a 5'-end diphospho-(purine-ribonucleoside) in mRNA + H(+) = a 5'-end (N(7)-methyl 5'-triphosphoguanosine)-(purine-ribonucleoside) in mRNA + L-histidyl-[protein]. The enzyme catalyses a 5'-end triphospho-ribonucleoside in mRNA + H2O = a 5'-end diphospho-ribonucleoside in mRNA + phosphate + H(+). The catalysed reaction is a ribonucleoside 5'-triphosphate + H2O = a ribonucleoside 5'-diphosphate + phosphate + H(+). It carries out the reaction ATP + H2O = ADP + phosphate + H(+). It catalyses the reaction RNA(n) + a ribonucleoside 5'-triphosphate = RNA(n+1) + diphosphate. The enzyme catalyses RNA(n) + ATP = RNA(n)-3'-adenine ribonucleotide + diphosphate. The catalysed reaction is 4-O-(ADP-D-ribosyl)-L-aspartyl-[protein] + H2O = L-aspartyl-[protein] + ADP-D-ribose + H(+). It carries out the reaction 5-O-(ADP-D-ribosyl)-L-glutamyl-[protein] + H2O = L-glutamyl-[protein] + ADP-D-ribose + H(+). It catalyses the reaction ADP-alpha-D-ribose 1''-phosphate + H2O = ADP-D-ribose + phosphate. In terms of biological role, inactive precursor of the viral replicase, which is activated by cleavages carried out by the viral protease nsP2. Its function is as follows. The early replication complex formed by the polyprotein P123 and nsP4 synthesizes minus-strand RNAs. As soon P123 is cleaved into mature proteins, the plus-strand RNAs synthesis begins. Functionally, the early replication complex formed by the polyprotein P123' and nsP4 synthesizes minus-strand RNAs. Polyprotein P123' is a short-lived polyprotein that accumulates during early stage of infection. As soon P123' is cleaved into mature proteins, the plus-strand RNAs synthesis begins. Cytoplasmic capping enzyme that catalyzes two virus-specific reactions: methyltransferase and nsP1 guanylyltransferase. mRNA-capping is necessary since all viral RNAs are synthesized in the cytoplasm, and host capping enzymes are restricted to the nucleus. The enzymatic reaction involves a covalent link between 7-methyl-GMP and nsP1, whereas eukaryotic capping enzymes form a covalent complex only with GMP. nsP1 capping consists in the following reactions: GTP is first methylated into 7-methyl-GMP and then is covalently linked to nsP1 to form the m7GMp-nsP1 complex from which 7-methyl-GMP complex is transferred to the mRNA to create the cap structure. NsP1 is needed for the initiation of the minus-strand RNAs synthesis. Probably serves as a membrane anchor for the replication complex composed of nsP1-nsP4. Palmitoylated nsP1 is remodeling host cell cytoskeleton, and induces filopodium-like structure formation at the surface of the host cell. Interacts with host TMEM45B; this interaction leads to viral replication inhibition. In terms of biological role, multifunctional protein whose N-terminus is part of the RNA polymerase complex and displays NTPase, RNA triphosphatase and helicase activities. NTPase and RNA triphosphatase are involved in viral RNA capping and helicase keeps a check on the dsRNA replication intermediates. The C-terminus harbors a protease that specifically cleaves the polyproteins and releases the mature proteins. Required for the shutoff of minus-strand RNAs synthesis. Specifically inhibits the host IFN response by promoting the nuclear export of host STAT1. Also inhibits host transcription by inducing rapid proteasome-dependent degradation of POLR2A, a catalytic subunit of the RNAPII complex. The resulting inhibition of cellular protein synthesis serves to ensure maximal viral gene expression and to evade host immune response. Its function is as follows. Seems to be essential for minus-strand RNAs and subgenomic 26S mRNAs synthesis. Displays mono-ADP-ribosylhydrolase activity. ADP-ribosylation is a post-translational modification that controls various processes of the host cell and the virus probably needs to revert it for optimal viral replication. Binds proteins of FXR family and sequesters them into the viral RNA replication complexes thereby inhibiting the formation of host stress granules on viral mRNAs. The nsp3'-FXR complexes bind viral RNAs and probably orchestrate the assembly of viral replication complexes, thanks to the ability of FXR family members to self-assemble and bind DNA. Functionally, seems to be essential for minus-strand RNAs and subgenomic 26S mRNAs synthesis. Displays mono-ADP-ribosylhydrolase activity. ADP-ribosylation is a post-translantional modification that controls various processes of the host cell and the virus probably needs to revert it for optimal viral replication. Binds proteins of G3BP family and sequesters them into the viral RNA replication complexes thereby inhibiting the formation of host stress granules on viral mRNAs. The nsp3-G3BP complexes bind viral RNAs and probably orchestrate the assembly of viral replication complexes, thanks to the ability of G3BP family members to self-assemble and bind DNA. RNA dependent RNA polymerase. Replicates genomic and antigenomic RNA by recognizing replications specific signals. The early replication complex formed by the polyprotein P123 and nsP4 synthesizes minus-strand RNAs. The late replication complex composed of fully processed nsP1-nsP4 is responsible for the production of genomic and subgenomic plus-strand RNAs. The core catalytic domain of nsP4 also possesses terminal adenylyltransferase (TATase) activity that is probably involved in maintenance and repair of the poly(A) tail, an element required for replication of the viral genome. Interacts with host TMEM45B; this interaction leads to viral replication inhibition. The sequence is that of Polyprotein P1234 from Acrocephalus scirpaceus (Eurasian reed-warbler).